A 256-amino-acid polypeptide reads, in one-letter code: Thiazole synthase (256 aa).

The active-site Schiff-base intermediate with DXP is Lys-96. Residues Gly-157, 184–185, and 206–207 contribute to the 1-deoxy-D-xylulose 5-phosphate site; these read AG and NT.

Belongs to the ThiG family. In terms of assembly, homotetramer. Forms heterodimers with either ThiH or ThiS.

It is found in the cytoplasm. The enzyme catalyses [ThiS sulfur-carrier protein]-C-terminal-Gly-aminoethanethioate + 2-iminoacetate + 1-deoxy-D-xylulose 5-phosphate = [ThiS sulfur-carrier protein]-C-terminal Gly-Gly + 2-[(2R,5Z)-2-carboxy-4-methylthiazol-5(2H)-ylidene]ethyl phosphate + 2 H2O + H(+). It functions in the pathway cofactor biosynthesis; thiamine diphosphate biosynthesis. Catalyzes the rearrangement of 1-deoxy-D-xylulose 5-phosphate (DXP) to produce the thiazole phosphate moiety of thiamine. Sulfur is provided by the thiocarboxylate moiety of the carrier protein ThiS. In vitro, sulfur can be provided by H(2)S. The sequence is that of Thiazole synthase from Brucella suis (strain ATCC 23445 / NCTC 10510).